We begin with the raw amino-acid sequence, 424 residues long: DNA repair protein Rad60 (424 aa).

At Y26 the chain carries Phosphotyrosine. A phosphoserine mark is found at S32 and S34. A disordered region spans residues 45-177; the sequence is LPKKSTKTGK…LTTTTSNSAS (133 aa). Positions 48–57 are enriched in basic residues; it reads KSTKTGKRKN. The span at 77–93 shows a compositional bias: basic and acidic residues; it reads QAEHKAVEPEEDMRTER. Residue S96 is modified to Phosphoserine. The span at 104–123 shows a compositional bias: basic and acidic residues; that stretch reads EMEKKNGQQSDVEKHAKEND. A compositionally biased stretch (basic residues) spans 156 to 166; sequence KPKKRGQKKRT. Residues 167–177 show a composition bias toward low complexity; that stretch reads SLTTTTSNSAS.

As to quaternary structure, forms a complex with dgrn; likely required for localization to the nuclear periphery. Interacts with the SMC5-SMC6 complex members SMC5 and SMC6/jnj following ionizing radiation (IR) to induce DNA damage. Interaction between the SMC5-SMC6 complex and the dgrn-Rad60 complex, may stabilize the association of heterochromatic DSBs with the nuclear periphery.

It is found in the nucleus. The protein resides in the nucleoplasm. Functionally, required for repair of DNA double strand breaks which occur during replication or are induced by ionizing radiation (IR). Functions with dgrn and downstream of the SMC5-SMC6 complex to regulate strand break repair. Likely functions by stabilizing the association of heterochromatic double strand breaks (DSBs) with the nuclear periphery as part of the homologous recombination (HR) repair process. This Drosophila melanogaster (Fruit fly) protein is DNA repair protein Rad60.